Reading from the N-terminus, the 119-residue chain is Outer membrane protein assembly factor BamE (119 aa).

Residues 1 to 19 (MQFTKWFIALPLAVTALSG) form the signal peptide. Cys20 carries the N-palmitoyl cysteine lipid modification. Cys20 is lipidated: S-diacylglycerol cysteine.

The protein belongs to the BamE family. Part of the Bam complex.

The protein resides in the cell outer membrane. Functionally, part of the outer membrane protein assembly complex, which is involved in assembly and insertion of beta-barrel proteins into the outer membrane. The sequence is that of Outer membrane protein assembly factor BamE from Vibrio cholerae serotype O1 (strain ATCC 39541 / Classical Ogawa 395 / O395).